The chain runs to 199 residues: NAD(P)H dehydrogenase (quinone) (199 aa).

In terms of domain architecture, Flavodoxin-like spans 4-190 (MLVLYYSAYG…DGARFQGRRV (187 aa)). FMN contacts are provided by residues 10 to 15 (SAYGYM) and 78 to 80 (TRY). Tyr-12 is an NAD(+) binding site. A substrate-binding site is contributed by Trp-98. FMN-binding positions include 113–119 (STATQHG) and His-134. The tract at residues 157–181 (GGAPYGMTTTADGDGSRQPSAQELD) is disordered. Over residues 163–177 (MTTTADGDGSRQPSA) the composition is skewed to polar residues.

The protein belongs to the WrbA family. FMN serves as cofactor.

It catalyses the reaction a quinone + NADH + H(+) = a quinol + NAD(+). The catalysed reaction is a quinone + NADPH + H(+) = a quinol + NADP(+). This is NAD(P)H dehydrogenase (quinone) from Brucella melitensis biotype 2 (strain ATCC 23457).